The following is a 256-amino-acid chain: Catechol O-methyltransferase A (256 aa).

Residues 1–27 (MLWVVLAVVVVLASVLVLLRQSSGLLA) form the signal peptide. Residue Asn-58 is glycosylated (N-linked (GlcNAc...) asparagine). S-adenosyl-L-methionine-binding residues include Val-84, Ser-114, Glu-132, and Asp-183. Asp-183 provides a ligand contact to Mg(2+). Lys-186 lines the substrate pocket. The Mg(2+) site is built by Asp-211 and Asn-212. The substrate site is built by Asn-212 and Glu-241.

It belongs to the class I-like SAM-binding methyltransferase superfamily. Cation-dependent O-methyltransferase family. Mg(2+) is required as a cofactor. As to expression, widely expressed. Has higher expression in females compared to males. Strongly expressed in liver and diencephalon. Expressed at lower levels in hindbrain, spinal cord, eye, telencephalon, spleen, gut, gill and muscle. Detected in ovary and testis. In eye, detected in all layers of the retina with highest expression in the inner nuclear layer. In gut, expressed in the lamina propria but has little or no expression in gut epithelium. In brain, has strongest expression near the midline of the telencephalon, in the periventricular gray zone of the optic tectum, in the preglomerular nucleus, and near the walls of the diencephalic ventricle.

The protein resides in the secreted. The catalysed reaction is a catechol + S-adenosyl-L-methionine = a guaiacol + S-adenosyl-L-homocysteine + H(+). Catalyzes the O-methylation, and thereby the inactivation, of catecholamine neurotransmitters and catechol hormones. Shows highest activity towards catecholestrogens and dobutamine. Also has lower activity towards L-DOPA, dopamine and epinephrine. Active towards the xenobiotic compounds methyl-DOPA, carbidopa, isoproterenol, and apomorphine. In Danio rerio (Zebrafish), this protein is Catechol O-methyltransferase A.